A 160-amino-acid chain; its full sequence is MKISILYSSKTGKTERVAKLIEEGVKRSGNIEVKTMNLDAVDKKFLQESEGIIFGTPTYYANISWEMKKWIDESSEFNLEGKLGAAFSTANSIAGGSDIALLTILNHLMVKGMLVYSGGVAFGKPKTHLGYVHINEIQENEDENARIFGERIANKVKQIF.

A Flavodoxin-like domain is found at 3–153 (ISILYSSKTG…NARIFGERIA (151 aa)).

It belongs to the flavodoxin family. FMN serves as cofactor.

Functionally, low-potential electron donor to a number of redox enzymes. This is Flavodoxin (floX) from Clostridium saccharobutylicum.